The sequence spans 536 residues: Feruloyl esterase B (536 aa).

Residues 1 to 20 form the signal peptide; the sequence is MKTSIVLSIVALFLTSKASA. Positions 21–59 constitute a CBM10 domain; the sequence is DCWSERLGWPCCSDSNAEVIYVDDDGDWGVENNDWCGIQ. The tract at residues 22–59 is cellulose-binding; the sequence is CWSERLGWPCCSDSNAEVIYVDDDGDWGVENNDWCGIQ. N-linked (GlcNAc...) asparagine glycosylation is present at Asn65. 12 tandem repeats follow at residues 78 to 90, 91 to 103, 104 to 116, 117 to 129, 134 to 146, 151 to 163, 164 to 176, 181 to 193, 194 to 206, 211 to 223, 224 to 236, and 237 to 249. The interval 78–249 is 12 X 13 AA repeats of N-Q-G-G-G-M-[PQ]-W-G-D-F-G-G; that stretch reads NQGGGMPWGD…GGMQWGDFGG (172 aa). Gly residues predominate over residues 203–252; the sequence is DFGGNQGGNQGGGMPWGDFGGNQGGGMQWGDFGGNQGGGMQWGDFGGNQG. Residues 203–273 form a disordered region; sequence DFGGNQGGNQ…SGPTVEYSTD (71 aa). Positions 257–536 are catalytic; that stretch reads WGNQGGNSGP…WDFVKQFSLP (280 aa).

As to quaternary structure, component of the multienzyme cellulase-hemicellulase complex.

Its subcellular location is the secreted. It carries out the reaction feruloyl-polysaccharide + H2O = ferulate + polysaccharide.. Its activity is regulated as follows. Inhibited by the specific serine esterase inhibitor AEBSF. In terms of biological role, involved in degradation of plant cell walls. Hydrolyzes of the feruloyl-arabinose ester bond in arabinoxylans as well as the feruloyl-galactose and feruloyl-arabinose ester bonds in pectin. The sequence is that of Feruloyl esterase B (ESTA) from Piromyces equi.